A 600-amino-acid chain; its full sequence is NADH-quinone oxidoreductase subunit C/D (600 aa).

The segment at 1-190 (MVNNMTDLTA…SPFELTKAKQ (190 aa)) is NADH dehydrogenase I subunit C. The tract at residues 214–600 (DFMFLNLGPN…IDFVMSDVDR (387 aa)) is NADH dehydrogenase I subunit D.

The protein in the N-terminal section; belongs to the complex I 30 kDa subunit family. It in the C-terminal section; belongs to the complex I 49 kDa subunit family. In terms of assembly, NDH-1 is composed of 13 different subunits. Subunits NuoB, CD, E, F, and G constitute the peripheral sector of the complex.

The protein localises to the cell inner membrane. It catalyses the reaction a quinone + NADH + 5 H(+)(in) = a quinol + NAD(+) + 4 H(+)(out). In terms of biological role, NDH-1 shuttles electrons from NADH, via FMN and iron-sulfur (Fe-S) centers, to quinones in the respiratory chain. The immediate electron acceptor for the enzyme in this species is believed to be ubiquinone. Couples the redox reaction to proton translocation (for every two electrons transferred, four hydrogen ions are translocated across the cytoplasmic membrane), and thus conserves the redox energy in a proton gradient. The polypeptide is NADH-quinone oxidoreductase subunit C/D (Escherichia coli O6:H1 (strain CFT073 / ATCC 700928 / UPEC)).